Consider the following 401-residue polypeptide: S-adenosylmethionine synthase (401 aa).

Residue 136–141 coordinates ATP; it reads GQGSVD.

Belongs to the AdoMet synthase 2 family. Mg(2+) is required as a cofactor.

It catalyses the reaction L-methionine + ATP + H2O = S-adenosyl-L-methionine + phosphate + diphosphate. The protein operates within amino-acid biosynthesis; S-adenosyl-L-methionine biosynthesis; S-adenosyl-L-methionine from L-methionine: step 1/1. Its function is as follows. Catalyzes the formation of S-adenosylmethionine from methionine and ATP. In Pyrococcus horikoshii (strain ATCC 700860 / DSM 12428 / JCM 9974 / NBRC 100139 / OT-3), this protein is S-adenosylmethionine synthase (mat).